A 124-amino-acid polypeptide reads, in one-letter code: Large ribosomal subunit protein bL12 (124 aa).

The protein belongs to the bacterial ribosomal protein bL12 family. Homodimer. Part of the ribosomal stalk of the 50S ribosomal subunit. Forms a multimeric L10(L12)X complex, where L10 forms an elongated spine to which 2 to 4 L12 dimers bind in a sequential fashion. Binds GTP-bound translation factors.

Functionally, forms part of the ribosomal stalk which helps the ribosome interact with GTP-bound translation factors. Is thus essential for accurate translation. In Phytoplasma australiense, this protein is Large ribosomal subunit protein bL12.